Reading from the N-terminus, the 110-residue chain is UPF0122 protein lmo1802 (110 aa).

This sequence belongs to the UPF0122 family.

Its function is as follows. Might take part in the signal recognition particle (SRP) pathway. This is inferred from the conservation of its genetic proximity to ftsY/ffh. May be a regulatory protein. The chain is UPF0122 protein lmo1802 from Listeria monocytogenes serovar 1/2a (strain ATCC BAA-679 / EGD-e).